We begin with the raw amino-acid sequence, 293 residues long: Diaminopimelate epimerase (293 aa).

Asn15, Gln47, and Asn67 together coordinate substrate. Cys76 acts as the Proton donor in catalysis. Substrate-binding positions include 77 to 78, Asn163, Asn197, and 215 to 216; these read GN and ER. Cys224 functions as the Proton acceptor in the catalytic mechanism. 225 to 226 is a substrate binding site; that stretch reads GS.

The protein belongs to the diaminopimelate epimerase family. As to quaternary structure, homodimer.

It localises to the cytoplasm. The catalysed reaction is (2S,6S)-2,6-diaminopimelate = meso-2,6-diaminopimelate. Its pathway is amino-acid biosynthesis; L-lysine biosynthesis via DAP pathway; DL-2,6-diaminopimelate from LL-2,6-diaminopimelate: step 1/1. In terms of biological role, catalyzes the stereoinversion of LL-2,6-diaminopimelate (L,L-DAP) to meso-diaminopimelate (meso-DAP), a precursor of L-lysine and an essential component of the bacterial peptidoglycan. The protein is Diaminopimelate epimerase of Chelativorans sp. (strain BNC1).